Reading from the N-terminus, the 225-residue chain is Phosphoglycolate phosphatase (225 aa).

The active-site Nucleophile is the D11. D11 and D13 together coordinate Mg(2+). A substrate-binding site is contributed by K153. The Mg(2+) site is built by D176 and D180.

The protein belongs to the archaeal SPP-like hydrolase family. Mg(2+) is required as a cofactor.

It catalyses the reaction 2-phosphoglycolate + H2O = glycolate + phosphate. In terms of biological role, catalyzes the dephosphorylation of 2-phosphoglycolate. This chain is Phosphoglycolate phosphatase, found in Halobacterium salinarum (strain ATCC 29341 / DSM 671 / R1).